The sequence spans 387 residues: MGRVGVLLLNLGGPERLEDVGPFLYNLFADPEIIRLPFPWLQKPLAWLISSLRTRKSQENYKQIGGGSPLRRITEEQATALRQSLSDRGQAAQVYIGMRYWHPFTEEAIAQIKADGIDRLVILPLYPQFSISTSGSSFRLLQRLRDRDPEFQKIDCSVVPSWYERSGYLQAMAELIAQELDKLEQPEQGHVFFSAHGVPVSYVEEAGDPYQREIEDCTRKIMETLGRSNPWTLAYQSRVGPVEWLQPYTEDALEELAERGVKDLVVVPISFVSEHIETLEEIDIEYREIAEEAGIERFLRVPALNTHPLFIQDLSDLVEQTLEQPRFRLEDVTLLPKKVKLYPQERWEWGITLNAEVWNGRIAMLGFLALLVELLTGRGPLHALGLL.

Fe cation contacts are provided by His-196 and Glu-277.

Belongs to the ferrochelatase family.

Its subcellular location is the cytoplasm. It carries out the reaction heme b + 2 H(+) = protoporphyrin IX + Fe(2+). Its pathway is porphyrin-containing compound metabolism; protoheme biosynthesis; protoheme from protoporphyrin-IX: step 1/1. In terms of biological role, catalyzes the ferrous insertion into protoporphyrin IX. The protein is Ferrochelatase of Synechococcus elongatus (strain ATCC 33912 / PCC 7942 / FACHB-805) (Anacystis nidulans R2).